The chain runs to 684 residues: UvrABC system protein B (684 aa).

The region spanning Asp32–Arg420 is the Helicase ATP-binding domain. Gly45–Thr52 is an ATP binding site. Residues Tyr98–Ile121 carry the Beta-hairpin motif. One can recognise a Helicase C-terminal domain in the interval Gln437–Leu603. In terms of domain architecture, UVR spans Met643–Arg678.

This sequence belongs to the UvrB family. Forms a heterotetramer with UvrA during the search for lesions. Interacts with UvrC in an incision complex.

It is found in the cytoplasm. Functionally, the UvrABC repair system catalyzes the recognition and processing of DNA lesions. A damage recognition complex composed of 2 UvrA and 2 UvrB subunits scans DNA for abnormalities. Upon binding of the UvrA(2)B(2) complex to a putative damaged site, the DNA wraps around one UvrB monomer. DNA wrap is dependent on ATP binding by UvrB and probably causes local melting of the DNA helix, facilitating insertion of UvrB beta-hairpin between the DNA strands. Then UvrB probes one DNA strand for the presence of a lesion. If a lesion is found the UvrA subunits dissociate and the UvrB-DNA preincision complex is formed. This complex is subsequently bound by UvrC and the second UvrB is released. If no lesion is found, the DNA wraps around the other UvrB subunit that will check the other stand for damage. This chain is UvrABC system protein B, found in Chlorobaculum tepidum (strain ATCC 49652 / DSM 12025 / NBRC 103806 / TLS) (Chlorobium tepidum).